The chain runs to 248 residues: 14-3-3-like protein 2 (248 aa).

The protein belongs to the 14-3-3 family. Interacts with daf-16. Interacts with sir-2.1. Interacts with hcf-1.

The protein localises to the cytoplasm. The protein resides in the nucleus. Functionally, required for extension of lifespan by sir-2.1. Required to modulate lifespan, in concert with hcf-1, acting redundantly with 14-3-3-like protein par-5. Promotes nuclear export of yap-1. Negatively regulates the transcriptional activity of daf-16 by sequestering it to the cytoplasm. The polypeptide is 14-3-3-like protein 2 (Caenorhabditis elegans).